The chain runs to 188 residues: MPVADTSQLTSGVAERYASSLFELALEQGAVDSVTADLDRFQAMLDESAELKRFVASPVFSAEDQLKAIIAISERAGISGFFANFLKVVARNRRLFALPGMIKAFRVIAANHRGEISAEVTSAHALTAEQENELKAALKGVTGKDVAIAVTVDPSILGGLIVKVGSRQIDTSLRTKLSTLKLALKEVG.

Belongs to the ATPase delta chain family. As to quaternary structure, F-type ATPases have 2 components, F(1) - the catalytic core - and F(0) - the membrane proton channel. F(1) has five subunits: alpha(3), beta(3), gamma(1), delta(1), epsilon(1). F(0) has three main subunits: a(1), b(2) and c(10-14). The alpha and beta chains form an alternating ring which encloses part of the gamma chain. F(1) is attached to F(0) by a central stalk formed by the gamma and epsilon chains, while a peripheral stalk is formed by the delta and b chains.

It is found in the cell inner membrane. In terms of biological role, f(1)F(0) ATP synthase produces ATP from ADP in the presence of a proton or sodium gradient. F-type ATPases consist of two structural domains, F(1) containing the extramembraneous catalytic core and F(0) containing the membrane proton channel, linked together by a central stalk and a peripheral stalk. During catalysis, ATP synthesis in the catalytic domain of F(1) is coupled via a rotary mechanism of the central stalk subunits to proton translocation. Its function is as follows. This protein is part of the stalk that links CF(0) to CF(1). It either transmits conformational changes from CF(0) to CF(1) or is implicated in proton conduction. This Rhizobium etli (strain ATCC 51251 / DSM 11541 / JCM 21823 / NBRC 15573 / CFN 42) protein is ATP synthase subunit delta.